Here is a 453-residue protein sequence, read N- to C-terminus: Homogentisate 1,2-dioxygenase (453 aa).

His-306 functions as the Proton acceptor in the catalytic mechanism. His-349 and Glu-355 together coordinate Fe cation. Positions 364 and 385 each coordinate homogentisate. His-385 provides a ligand contact to Fe cation.

Belongs to the homogentisate dioxygenase family. As to quaternary structure, hexamer; dimer of trimers. It depends on Fe cation as a cofactor.

The catalysed reaction is homogentisate + O2 = 4-maleylacetoacetate + H(+). The protein operates within amino-acid degradation; L-phenylalanine degradation; acetoacetate and fumarate from L-phenylalanine: step 4/6. Functionally, involved in the catabolism of homogentisate (2,5-dihydroxyphenylacetate or 2,5-OH-PhAc), a central intermediate in the degradation of phenylalanine and tyrosine. Catalyzes the oxidative ring cleavage of the aromatic ring of homogentisate to yield maleylacetoacetate. The chain is Homogentisate 1,2-dioxygenase from Rhizobium johnstonii (strain DSM 114642 / LMG 32736 / 3841) (Rhizobium leguminosarum bv. viciae).